The following is a 391-amino-acid chain: Phosphoglycerate kinase (391 aa).

Substrate-binding positions include 21–23 (DLN), Arg-36, 59–62 (HLGR), Arg-113, and Arg-146. ATP-binding positions include Lys-197, Glu-319, and 345–348 (GGDT).

The protein belongs to the phosphoglycerate kinase family. In terms of assembly, monomer.

The protein resides in the cytoplasm. The enzyme catalyses (2R)-3-phosphoglycerate + ATP = (2R)-3-phospho-glyceroyl phosphate + ADP. The protein operates within carbohydrate degradation; glycolysis; pyruvate from D-glyceraldehyde 3-phosphate: step 2/5. This chain is Phosphoglycerate kinase, found in Xanthomonas oryzae pv. oryzae (strain PXO99A).